We begin with the raw amino-acid sequence, 186 residues long: Putative manganese efflux pump MntP (186 aa).

A run of 6 helical transmembrane segments spans residues 3–23, 39–59, 65–85, 109–129, 133–153, and 166–186; these read PIALLLLAFAMSTDAFAAAIG, IGIIFGSIEAITPLVGWLIGK, VEAWDHWIAFSLLTVLGLHMI, CLTAFSTSIDAMAVGVSLAFI, IWIASALIGLATTLMVTIGIM, and AEIFGGLTLIAVGAWILYGQL.

This sequence belongs to the MntP (TC 9.B.29) family.

The protein localises to the cell inner membrane. Probably functions as a manganese efflux pump. The chain is Putative manganese efflux pump MntP from Alcanivorax borkumensis (strain ATCC 700651 / DSM 11573 / NCIMB 13689 / SK2).